Consider the following 1053-residue polypeptide: Sal-like protein 4 (1053 aa).

Residues 1 to 62 (MSRRKQAKPQ…DEVASEDEAT (62 aa)) form a disordered region. A compositionally biased stretch (low complexity) spans 20–46 (EQQPQQQTPEFADAAPAAPAAGELGAP). Serine 57 carries the post-translational modification Phosphoserine. The C2H2-type 1; atypical zinc finger occupies 72 to 94 (HVCEKCCAEFFSISEFLEHKKNC). A disordered region spans residues 116 to 149 (SGAVLSHQPTSPGSKDCHRENGGSSEDMKEKPDA). A compositionally biased stretch (basic and acidic residues) spans 130–149 (KDCHRENGGSSEDMKEKPDA). Lysine 156 participates in a covalent cross-link: Glycyl lysine isopeptide (Lys-Gly) (interchain with G-Cter in SUMO1); alternate. Lysine 156 participates in a covalent cross-link: Glycyl lysine isopeptide (Lys-Gly) (interchain with G-Cter in SUMO2); alternate. Residues lysine 175, lysine 190, and lysine 290 each participate in a glycyl lysine isopeptide (Lys-Gly) (interchain with G-Cter in SUMO2) cross-link. Serine 307 bears the Phosphoserine mark. Lysine 316 is covalently cross-linked (Glycyl lysine isopeptide (Lys-Gly) (interchain with G-Cter in SUMO1); alternate). Residue lysine 316 forms a Glycyl lysine isopeptide (Lys-Gly) (interchain with G-Cter in SUMO2); alternate linkage. Lysine 372 is covalently cross-linked (Glycyl lysine isopeptide (Lys-Gly) (interchain with G-Cter in SUMO2)). Residue lysine 374 forms a Glycyl lysine isopeptide (Lys-Gly) (interchain with G-Cter in SUMO1); alternate linkage. A Glycyl lysine isopeptide (Lys-Gly) (interchain with G-Cter in SUMO2); alternate cross-link involves residue lysine 374. 2 consecutive C2H2-type zinc fingers follow at residues 382-404 (HKCK…LRSH) and 410-432 (FVCS…FHRH). Lysine 436 is covalently cross-linked (Glycyl lysine isopeptide (Lys-Gly) (interchain with G-Cter in SUMO2)). Residues 483–496 (VGLPQNLSSGTNPK) show a composition bias toward polar residues. The disordered stretch occupies residues 483–546 (VGLPQNLSSG…QGSGTPEPGS (64 aa)). Residue threonine 541 is modified to Phosphothreonine. Residue lysine 550 forms a Glycyl lysine isopeptide (Lys-Gly) (interchain with G-Cter in SUMO2) linkage. 2 C2H2-type zinc fingers span residues 566 to 588 (NECL…YRTH) and 594 to 616 (FQCK…LGVH). Residues lysine 597 and lysine 623 each participate in a glycyl lysine isopeptide (Lys-Gly) (interchain with G-Cter in SUMO2) cross-link. The segment at 626–648 (HSCPICQKKFTNAVMLQQHIRMH) adopts a C2H2-type 6 zinc-finger fold. Disordered stretches follow at residues 694 to 714 (EEVS…PLPS), 736 to 776 (VGPA…QSRS), and 788 to 828 (LSPA…LPST). Positions 698-708 (SQEAPSSSSKV) are enriched in low complexity. Polar residues-rich tracts occupy residues 743–776 (LQRQ…QSRS) and 788–797 (LSPANSQAES). 2 positions are modified to phosphoserine: serine 776 and serine 789. Residues 810 to 821 (ESSENSRTEMEG) show a composition bias toward basic and acidic residues. Lysine 838 participates in a covalent cross-link: Glycyl lysine isopeptide (Lys-Gly) (interchain with G-Cter in SUMO1); alternate. Lysine 838 is covalently cross-linked (Glycyl lysine isopeptide (Lys-Gly) (interchain with G-Cter in SUMO2); alternate). Serine 852 carries the post-translational modification Phosphoserine. A C2H2-type 7 zinc finger spans residues 870-892 (HGCTRCGKNFSSASALQIHERTH). Lysine 896 is covalently cross-linked (Glycyl lysine isopeptide (Lys-Gly) (interchain with G-Cter in SUMO2)). The C2H2-type 8 zinc-finger motif lies at 898 to 920 (FVCNICGRAFTTKGNLKVHYMTH). Residues lysine 932 and lysine 947 each participate in a glycyl lysine isopeptide (Lys-Gly) (interchain with G-Cter in SUMO2) cross-link. The disordered stretch occupies residues 1018 to 1039 (GSQSGISADVEKPSATDGVPKH). Serine 1019 carries the phosphoserine modification.

Belongs to the sal C2H2-type zinc-finger protein family. Interacts with POU5F1/OCT4. Interacts with NANOG. Interacts with BEND3. Interacts with NSD2 (via PHD-type zinc fingers 1, 2 and 3). Interacts with NRBP1. Isoform SALL4B exists primarily as a ubiquitinated form. Post-translationally, sumoylation with both SUMO1 and SUMO2 regulates the stability, subcellular localization, transcriptional activity, and may reduce interaction with POU5F1/OCT4. Expressed in testis. Constitutively expressed in acute myeloid leukemia (AML).

It is found in the cytoplasm. Its subcellular location is the nucleus. Transcription factor with a key role in the maintenance and self-renewal of embryonic and hematopoietic stem cells. In Homo sapiens (Human), this protein is Sal-like protein 4 (SALL4).